The chain runs to 512 residues: Probable metalloreductase AIM14 (512 aa).

7 helical membrane-spanning segments follow: residues 20–40, 61–81, 97–117, 132–152, 161–181, 191–211, and 218–235; these read IKYG…ILIC, PLFI…VFHV, MSYA…SIGL, VIIA…ILEG, LWNF…IISL, YFYV…CLHA, and YAIA…ERYA. In terms of domain architecture, Ferric oxidoreductase spans 94–206; sequence FGRMSYALLP…NITVWLFVGL (113 aa). The 126-residue stretch at 230-355 folds into the FAD-binding FR-type domain; sequence IFERYAKSHS…GGSGISFALP (126 aa). Over residues 427-436 the composition is skewed to low complexity; that stretch reads ESLPSSETPS. A disordered region spans residues 427-451; sequence ESLPSSETPSRTVNDDSLSQDTRPK. The segment covering 437–447 has biased composition (polar residues); it reads RTVNDDSLSQD.

Belongs to the ferric reductase (FRE) family. AIM14 subfamily.

It localises to the membrane. In terms of biological role, probable cell surface metalloreductase. May be involved in iron or copper homeostasis. The protein is Probable metalloreductase AIM14 (AIM14) of Debaryomyces hansenii (strain ATCC 36239 / CBS 767 / BCRC 21394 / JCM 1990 / NBRC 0083 / IGC 2968) (Yeast).